The sequence spans 451 residues: MDWSEDPGMPPPAPPVLSVSELNRMARRALESQLPLLWVEGEVSNFMRAASGHWYFSLKDATAQVRCVMFRGRNQFAEFTPANGDHVEIRALPSLYEARGEFQLGAESIRRAGAGRLYEAFVRLKAKLEGEGLFDPAKKRALPRFPRCLGVVTSPQAAALRDVLTALGRRMPGLPVILYPTPVQGSGAGAQIAAAIRAAGTRAECDVLLVCRGGGALEDLWAFNDEAVARAIAASPIPVVSGVGHETDFTLADFAADLRAPTPTAAAELASPVAEEMLRALERHARLLRQHHARRQQADMQRLDYLARRLIHPAQQLRRRQLGIAQLAQRLHGAVRARLTREQLRIAQLGERRTSPRHALQRQQQVLESLGARAARAAESARIGRGLTLARLASSLAHLNPDNVLARGYSIVQQENGAVVHDAATLRAGDGLEIRFHRGAAHARVESAQPE.

It belongs to the XseA family. Heterooligomer composed of large and small subunits.

The protein resides in the cytoplasm. It carries out the reaction Exonucleolytic cleavage in either 5'- to 3'- or 3'- to 5'-direction to yield nucleoside 5'-phosphates.. Bidirectionally degrades single-stranded DNA into large acid-insoluble oligonucleotides, which are then degraded further into small acid-soluble oligonucleotides. The chain is Exodeoxyribonuclease 7 large subunit from Thiobacillus denitrificans (strain ATCC 25259 / T1).